The sequence spans 106 residues: NADH-quinone oxidoreductase subunit K (106 aa).

3 helical membrane-spanning segments follow: residues 10-30 (VTYILGLAGILFSIGVLGVLI), 34-54 (IVIIFMSVELILNSVNLVFVT), and 67-87 (IVFFVMAIAAAEAAVGLALVI).

This sequence belongs to the complex I subunit 4L family. NDH-1 is composed of 14 different subunits. Subunits NuoA, H, J, K, L, M, N constitute the membrane sector of the complex.

It is found in the cell inner membrane. The enzyme catalyses a quinone + NADH + 5 H(+)(in) = a quinol + NAD(+) + 4 H(+)(out). Its function is as follows. NDH-1 shuttles electrons from NADH, via FMN and iron-sulfur (Fe-S) centers, to quinones in the respiratory chain. The immediate electron acceptor for the enzyme in this species is believed to be ubiquinone. Couples the redox reaction to proton translocation (for every two electrons transferred, four hydrogen ions are translocated across the cytoplasmic membrane), and thus conserves the redox energy in a proton gradient. The chain is NADH-quinone oxidoreductase subunit K from Leptospira biflexa serovar Patoc (strain Patoc 1 / Ames).